Here is a 105-residue protein sequence, read N- to C-terminus: Pyrimidine/purine nucleoside phosphorylase (105 aa).

Belongs to the nucleoside phosphorylase PpnP family.

It carries out the reaction a purine D-ribonucleoside + phosphate = a purine nucleobase + alpha-D-ribose 1-phosphate. It catalyses the reaction adenosine + phosphate = alpha-D-ribose 1-phosphate + adenine. The enzyme catalyses cytidine + phosphate = cytosine + alpha-D-ribose 1-phosphate. The catalysed reaction is guanosine + phosphate = alpha-D-ribose 1-phosphate + guanine. It carries out the reaction inosine + phosphate = alpha-D-ribose 1-phosphate + hypoxanthine. It catalyses the reaction thymidine + phosphate = 2-deoxy-alpha-D-ribose 1-phosphate + thymine. The enzyme catalyses uridine + phosphate = alpha-D-ribose 1-phosphate + uracil. The catalysed reaction is xanthosine + phosphate = alpha-D-ribose 1-phosphate + xanthine. Its function is as follows. Catalyzes the phosphorolysis of diverse nucleosides, yielding D-ribose 1-phosphate and the respective free bases. Can use uridine, adenosine, guanosine, cytidine, thymidine, inosine and xanthosine as substrates. Also catalyzes the reverse reactions. The sequence is that of Pyrimidine/purine nucleoside phosphorylase from Acidovorax ebreus (strain TPSY) (Diaphorobacter sp. (strain TPSY)).